Here is a 284-residue protein sequence, read N- to C-terminus: Bifunctional protein FolD (284 aa).

NADP(+)-binding positions include 165–167 and Ser-190; that span reads GRS.

This sequence belongs to the tetrahydrofolate dehydrogenase/cyclohydrolase family. As to quaternary structure, homodimer.

It catalyses the reaction (6R)-5,10-methylene-5,6,7,8-tetrahydrofolate + NADP(+) = (6R)-5,10-methenyltetrahydrofolate + NADPH. It carries out the reaction (6R)-5,10-methenyltetrahydrofolate + H2O = (6R)-10-formyltetrahydrofolate + H(+). Its pathway is one-carbon metabolism; tetrahydrofolate interconversion. In terms of biological role, catalyzes the oxidation of 5,10-methylenetetrahydrofolate to 5,10-methenyltetrahydrofolate and then the hydrolysis of 5,10-methenyltetrahydrofolate to 10-formyltetrahydrofolate. The chain is Bifunctional protein FolD from Streptococcus pyogenes serotype M28 (strain MGAS6180).